A 358-amino-acid polypeptide reads, in one-letter code: DnaJ homolog subfamily C member 18 (358 aa).

Residues 82–146 (NYYEILGVSR…DKRLRYDEYG (65 aa)) form the J domain. A helical membrane pass occupies residues 228 to 248 (AFIQLLPVLVIVIISVITQLL).

The protein localises to the endoplasmic reticulum membrane. This Macaca fascicularis (Crab-eating macaque) protein is DnaJ homolog subfamily C member 18 (DNAJC18).